The chain runs to 275 residues: NH(3)-dependent NAD(+) synthetase (275 aa).

Glycine 50–serine 57 contributes to the ATP binding site. Residue aspartate 56 participates in Mg(2+) binding. Position 147 (arginine 147) interacts with deamido-NAD(+). Threonine 167 is a binding site for ATP. A Mg(2+)-binding site is contributed by glutamate 172. Deamido-NAD(+) contacts are provided by lysine 180 and aspartate 187. Residues lysine 196 and threonine 218 each coordinate ATP. Histidine 267–lysine 268 is a deamido-NAD(+) binding site.

Belongs to the NAD synthetase family. As to quaternary structure, homodimer.

The catalysed reaction is deamido-NAD(+) + NH4(+) + ATP = AMP + diphosphate + NAD(+) + H(+). It participates in cofactor biosynthesis; NAD(+) biosynthesis; NAD(+) from deamido-NAD(+) (ammonia route): step 1/1. In terms of biological role, catalyzes the ATP-dependent amidation of deamido-NAD to form NAD. Uses ammonia as a nitrogen source. This Pseudomonas syringae pv. tomato (strain ATCC BAA-871 / DC3000) protein is NH(3)-dependent NAD(+) synthetase.